We begin with the raw amino-acid sequence, 464 residues long: MDNNSNKRMGRPHVVVIPYPAQGHVLPLISFSRYLAKQGIQITFINTEFNHNRIISSLPNSPHEDYVGDQINLVSIPDGLEDSPEERNIPGKLSESVLRFMPKKVEELIERMMAETSGGTIISCVVADQSLGWAIEVAAKFGIRRTAFCPAAAASMVLGFSIQKLIDDGLIDSDGTVRVNKTIQLSPGMPKMETDKFVWVCLKNKESQKNIFQLMLQNNNSIESTDWLLCNSVHELETAAFGLGPNIVPIGPIGWAHSLEEGSTSLGSFLPHDRDCLDWLDRQIPGSVIYVAFGSFGVMGNPQLEELAIGLELTKRPVLWVTGDQQPIKLGSDRVKVVRWAPQREVLSSGAIGCFVSHCGWNSTLEGAQNGIPFLCIPYFADQFINKAYICDVWKIGLGLERDARGVVPRLEVKKKIDEIMRDGGEYEERAMKVKEIVMKSVAKDGISCENLNKFVNWIKSQVN.

UDP-alpha-D-glucose-binding positions include serine 295, 341 to 343 (APQ), 358 to 366 (HCGWNSTLE), and 380 to 383 (FADQ).

It belongs to the UDP-glycosyltransferase family.

The protein is UDP-glycosyltransferase 83A1 (UGT83A1) of Arabidopsis thaliana (Mouse-ear cress).